Here is a 152-residue protein sequence, read N- to C-terminus: MKAVIQRVSEARVEVDGSTVGAIGRGILVLLGVEKGDTERDAAWLAEKMAGLRIFEDDAGKMNLSVREVEGSILAVSQFTLAGNCAKGRRPSFDTAAPPDEGKRLYDRFVDLIRETGIPTATGIFQADMKVHLVNDGPVTFILDTKSRSSST.

A Gly-cisPro motif, important for rejection of L-amino acids motif is present at residues 137–138 (GP).

The protein belongs to the DTD family. Homodimer.

The protein localises to the cytoplasm. The enzyme catalyses glycyl-tRNA(Ala) + H2O = tRNA(Ala) + glycine + H(+). The catalysed reaction is a D-aminoacyl-tRNA + H2O = a tRNA + a D-alpha-amino acid + H(+). Its function is as follows. An aminoacyl-tRNA editing enzyme that deacylates mischarged D-aminoacyl-tRNAs. Also deacylates mischarged glycyl-tRNA(Ala), protecting cells against glycine mischarging by AlaRS. Acts via tRNA-based rather than protein-based catalysis; rejects L-amino acids rather than detecting D-amino acids in the active site. By recycling D-aminoacyl-tRNA to D-amino acids and free tRNA molecules, this enzyme counteracts the toxicity associated with the formation of D-aminoacyl-tRNA entities in vivo and helps enforce protein L-homochirality. The protein is D-aminoacyl-tRNA deacylase of Geobacter sulfurreducens (strain ATCC 51573 / DSM 12127 / PCA).